Consider the following 443-residue polypeptide: FAD-dependent monooxygenase orf3 (443 aa).

The helical transmembrane segment at 5–25 (SIEVAIIGAGITGITLALGLL) threads the bilayer. 2 residues coordinate FAD: Glu35 and Gly48. N-linked (GlcNAc...) asparagine glycans are attached at residues Asn75 and Asn87. An FAD-binding site is contributed by Arg116. The active site involves Arg199. 2 residues coordinate FAD: Asp315 and Ala328.

Belongs to the paxM FAD-dependent monooxygenase family. Requires FAD as cofactor.

The protein localises to the membrane. It participates in secondary metabolite biosynthesis. Functionally, FAD-dependent monooxygenase; part of the gene cluster that mediates the biosynthesis of nigerpyrone and its derivatives carbonarone A and pestalamide A. The biosynthesis pathway begins with the polyketide assembly by epaA to form phenylacetyl triketide precursor from successive condensation of two malonyl-CoA, presumably with one phenylacetyl-CoA starter unit produced by the phenylacetyl-CoA ligase epaB. For the nigerpyrone biosynthesis, the reactive polyketide chain is released as an aldehyde through the R-domain. A nonenzymatic cyclization and dehydration may create nigerpyrone. For the biosynthesis of carbonarone A and pestalamide A, an extra methyl group is added through the C-methyltransferase domain. Several further steps involving the dehydrogenase orf1, the cytochrome P450 monooxygenase orf2 and the FAD-dependent monooxygenase orf3 are required to form a carbonarone A precursor which is converted to carbonarone A via cyclization. The O-acetyltransferase epaC could catalyze the transfer of 2-methylsuccinyl-CoA, a common intermediate in the ethylmalonyl-CoA pathway, to generate the final product pestalamide A. This chain is FAD-dependent monooxygenase orf3, found in Aspergillus niger (strain ATCC MYA-4892 / CBS 513.88 / FGSC A1513).